The primary structure comprises 302 residues: Arginase (302 aa).

Mn(2+) is bound by residues His103, Asp126, His128, and Asp130. Substrate contacts are provided by residues His128–Asn132, Ser139–Asn141, and Asp180. Residues Asp229 and Asp231 each coordinate Mn(2+). 2 residues coordinate substrate: Thr243 and Glu274.

Belongs to the arginase family. The cofactor is Mn(2+).

The catalysed reaction is L-arginine + H2O = urea + L-ornithine. It participates in nitrogen metabolism; urea cycle; L-ornithine and urea from L-arginine: step 1/1. The protein is Arginase (arg) of Staphylococcus aureus (strain MSSA476).